Consider the following 197-residue polypeptide: UDP-N-acetylglucosamine transferase subunit alg13 (197 aa).

The tract at residues 174–197 is disordered; sequence VRGPDQKNQPTLEQVMSDEMGFVD.

The protein belongs to the glycosyltransferase 28 family. In terms of assembly, heterodimer with alg14 to form a functional enzyme.

It is found in the endoplasmic reticulum. It catalyses the reaction an N-acetyl-alpha-D-glucosaminyl-diphospho-di-trans,poly-cis-dolichol + UDP-N-acetyl-alpha-D-glucosamine = an N,N'-diacetylchitobiosyl-diphospho-di-trans,poly-cis-dolichol + UDP + H(+). Its function is as follows. Involved in protein N-glycosylation. Essential for the second step of the dolichol-linked oligosaccharide pathway. This is UDP-N-acetylglucosamine transferase subunit alg13 (alg13) from Aspergillus fumigatus (strain ATCC MYA-4609 / CBS 101355 / FGSC A1100 / Af293) (Neosartorya fumigata).